The chain runs to 102 residues: Small ribosomal subunit protein uS10 (102 aa).

The interval 30-58 (TGVNLSGPIPLPTKTLEIPTRKSPDGEGT) is disordered.

Belongs to the universal ribosomal protein uS10 family. Part of the 30S ribosomal subunit.

Its function is as follows. Involved in the binding of tRNA to the ribosomes. The sequence is that of Small ribosomal subunit protein uS10 from Haloquadratum walsbyi (strain DSM 16790 / HBSQ001).